We begin with the raw amino-acid sequence, 156 residues long: 6,7-dimethyl-8-ribityllumazine synthase (156 aa).

5-amino-6-(D-ribitylamino)uracil-binding positions include phenylalanine 24, 56–58, and 80–82; these read SFE and AVV. 85 to 86 is a binding site for (2S)-2-hydroxy-3-oxobutyl phosphate; the sequence is ET. The active-site Proton donor is histidine 88. 5-amino-6-(D-ribitylamino)uracil is bound at residue phenylalanine 113. Arginine 127 is a binding site for (2S)-2-hydroxy-3-oxobutyl phosphate.

This sequence belongs to the DMRL synthase family.

It carries out the reaction (2S)-2-hydroxy-3-oxobutyl phosphate + 5-amino-6-(D-ribitylamino)uracil = 6,7-dimethyl-8-(1-D-ribityl)lumazine + phosphate + 2 H2O + H(+). The protein operates within cofactor biosynthesis; riboflavin biosynthesis; riboflavin from 2-hydroxy-3-oxobutyl phosphate and 5-amino-6-(D-ribitylamino)uracil: step 1/2. Functionally, catalyzes the formation of 6,7-dimethyl-8-ribityllumazine by condensation of 5-amino-6-(D-ribitylamino)uracil with 3,4-dihydroxy-2-butanone 4-phosphate. This is the penultimate step in the biosynthesis of riboflavin. This Thermococcus kodakarensis (strain ATCC BAA-918 / JCM 12380 / KOD1) (Pyrococcus kodakaraensis (strain KOD1)) protein is 6,7-dimethyl-8-ribityllumazine synthase.